The sequence spans 361 residues: G-protein coupled receptor 183 (361 aa).

At 1-31 (MDIQMANNFTPPSATPQGNDCDLYAHHSTAR) the chain is on the extracellular side. The helical transmembrane segment at 32–57 (IVMPLHYSLVFIIGLVGNLLALVVIV) threads the bilayer. The Cytoplasmic portion of the chain corresponds to 58-77 (QNRKKINSTTLYSTNLVISD). The helical transmembrane segment at 78-95 (ILFTTALPTRIAYYAMGF) threads the bilayer. Residue R87 participates in 7alpha,25-dihydroxycholesterol binding. At 96 to 105 (DWRIGDALCR) the chain is on the extracellular side. C104 and C181 are joined by a disulfide. Residues 106 to 127 (ITALVFYINTYAGVNFMTCLSI) form a helical membrane-spanning segment. The 7alpha,25-dihydroxycholesterol site is built by Y112 and Y116. Residues 126-134 (SIDRFIAVV) form an interaction with G proteins region. Over 128 to 149 (DRFIAVVHPLRYNKIKRIEHAK) the chain is Cytoplasmic. Residues 150–168 (GVCIFVWILVFAQTLPLLI) form a helical membrane-spanning segment. Topologically, residues 169-192 (NPMSKQEAERITCMEYPNFEETKS) are extracellular. A helical transmembrane segment spans residues 193–215 (LPWILLGACFIGYVLPLIIILIC). Topologically, residues 216 to 241 (YSQICCKLFRTAKQNPLTEKSGVNKK) are cytoplasmic. The helical transmembrane segment at 242–265 (ALNTIILIIVVFVLCFTPYHVAII) threads the bilayer. A 7alpha,25-dihydroxycholesterol-binding site is contributed by Y260. At 266-287 (QHMIKKLRFSNFLECSQRHSFQ) the chain is on the extracellular side. Residues 288-312 (ISLHFTVCLMNFNCCMDPFIYFFAC) form a helical membrane-spanning segment. The Cytoplasmic segment spans residues 313 to 361 (KGYKRKVMRMLKRQVSVSISSAVKSAPEENSREMTETQMMIHSKSSNGK). S328 carries the phosphoserine modification. Residues 340-361 (EENSREMTETQMMIHSKSSNGK) are disordered. Residues 348 to 361 (ETQMMIHSKSSNGK) are compositionally biased toward polar residues.

The protein belongs to the G-protein coupled receptor 1 family. Homodimer and heterodimer. Heterodimerizes with CXCR5; leading to modulate the interaction between of CXCL13 and CXCR5. In terms of tissue distribution, expressed abundantly in lymphoid tissues such as spleen and lymph node, and in B- and T-lymphocytes. Also highly expressed in lung, heart and gastrointestinal tract, and weakly expressed in the urogenital system and brain. Expressed in astrocytes.

Its subcellular location is the cell membrane. G-protein coupled receptor expressed in lymphocytes that acts as a chemotactic receptor for B-cells, T-cells, splenic dendritic cells, monocytes/macrophages and astrocytes. Receptor for oxysterol 7-alpha,25-dihydroxycholesterol (7-alpha,25-OHC) and other related oxysterols. Mediates cell positioning and movement of a number of cells by binding the 7-alpha,25-OHC ligand that forms a chemotactic gradient. Binding of 7-alpha,25-OHC mediates the correct localization of B-cells during humoral immune responses. Guides B-cell movement along the B-cell zone-T-cell zone boundary and later to interfollicular and outer follicular regions. Its specific expression during B-cell maturation helps position B-cells appropriately for mounting T-dependent antibody responses. Collaborates with CXCR5 to mediate B-cell migration; probably by forming a heterodimer with CXCR5 that affects the interaction between of CXCL13 and CXCR5. Also acts as a chemotactic receptor for some T-cells upon binding to 7-alpha,25-OHC ligand. Promotes follicular helper T (Tfh) cells differentiation by positioning activated T-cells at the follicle-T-zone interface, promoting contact of newly activated CD4 T-cells with activated dendritic cells and exposing them to Tfh-cell-promoting inducible costimulator (ICOS) ligand. Expression in splenic dendritic cells is required for their homeostasis, localization and ability to induce B- and T-cell responses: GPR183 acts as a chemotactic receptor in dendritic cells that mediates the accumulation of CD4(+) dendritic cells in bridging channels. Regulates migration of astrocytes and is involved in communication between astrocytes and macrophages. Promotes osteoclast precursor migration to bone surfaces. Signals constitutively through G(i)-alpha, but not G(s)-alpha or G(q)-alpha. Signals constitutively also via MAPK1/3 (ERK1/2). The polypeptide is G-protein coupled receptor 183 (Homo sapiens (Human)).